The primary structure comprises 265 residues: Chanoclavine-I dehydrogenase easD (265 aa).

An N-terminal signal peptide occupies residues 1-20 (MSFVSSKIFAITGGASGIGA). NADP(+) contacts are provided by Ile18, Asp66, Arg132, Tyr169, Lys173, and Thr205. Tyr169 (proton donor) is an active-site residue. The active-site Lowers pKa of active site Tyr is Lys173.

It belongs to the short-chain dehydrogenases/reductases (SDR) family. In terms of assembly, homotetramer.

It carries out the reaction chanoclavine-I + NAD(+) = chanoclavine-I aldehyde + NADH + H(+). It participates in alkaloid biosynthesis; ergot alkaloid biosynthesis. Chanoclavine-I dehydrogenase; part of the gene cluster that mediates the biosynthesis of fungal ergot alkaloid. DmaW catalyzes the first step of ergot alkaloid biosynthesis by condensing dimethylallyl diphosphate (DMAP) and tryptophan to form 4-dimethylallyl-L-tryptophan. The second step is catalyzed by the methyltransferase easF that methylates 4-dimethylallyl-L-tryptophan in the presence of S-adenosyl-L-methionine, resulting in the formation of 4-dimethylallyl-L-abrine. The catalase easC and the FAD-dependent oxidoreductase easE then transform 4-dimethylallyl-L-abrine to chanoclavine-I which is further oxidized by easD in the presence of NAD(+), resulting in the formation of chanoclavine-I aldehyde. Chanoclavine-I aldehyde is the precursor of ergoamides and ergopeptines in Clavicipitaceae, and clavine-type alcaloids such as fumiclavine in Trichocomaceae. However, the metabolites downstream of chanoclavine-I aldehyde in Arthrodermataceae have not been identified yet. The polypeptide is Chanoclavine-I dehydrogenase easD (Trichophyton verrucosum (strain HKI 0517)).